Reading from the N-terminus, the 138-residue chain is ATP synthase epsilon chain (138 aa).

Belongs to the ATPase epsilon chain family. F-type ATPases have 2 components, CF(1) - the catalytic core - and CF(0) - the membrane proton channel. CF(1) has five subunits: alpha(3), beta(3), gamma(1), delta(1), epsilon(1). CF(0) has three main subunits: a, b and c.

It localises to the cell membrane. Functionally, produces ATP from ADP in the presence of a proton gradient across the membrane. The polypeptide is ATP synthase epsilon chain (Streptococcus suis (strain 98HAH33)).